The primary structure comprises 384 residues: Sphingosine kinase 1 (384 aa).

The region spanning 12-159 (PRPCRVLVLL…MNLLSLHTAS (148 aa)) is the DAGKc domain. ATP contacts are provided by residues 22-24 (NPR) and 54-58 (TERRN). 79-82 (SGDG) serves as a coordination point for substrate. Aspartate 81 acts as the Proton donor/acceptor in catalysis. Residues glutamate 86 and 111-113 (GSG) contribute to the ATP site. 2 consecutive short sequence motifs (nuclear export signal) follow at residues 147-155 (LSPMNLLSL) and 161-169 (LRLFSVLSL). Aspartate 178 contacts substrate. 2 residues coordinate ATP: arginine 185 and arginine 191. A Phosphothreonine modification is found at threonine 193. Phosphoserine is present on serine 225. 341–343 (DGE) serves as a coordination point for ATP.

Interacts with ACY1. Binds to calmodulin. Interacts with SPHKAP. Interacts with CIB1, the interaction occurs in a calcium-dependent manner. Interacts with TRAF2. Interacts with EEF1A1; the interaction enhances SPHK1 kinase activity. Requires Mg(2+) as cofactor. As to expression, widely expressed with highest levels in adult liver, kidney, heart and skeletal muscle. Expressed in brain cortex (at protein level).

It is found in the cytoplasm. The protein resides in the nucleus. It localises to the cell membrane. The protein localises to the endosome membrane. Its subcellular location is the membrane. It is found in the clathrin-coated pit. The protein resides in the synapse. It carries out the reaction a sphingoid base + ATP = a sphingoid 1-phosphate + ADP + H(+). The catalysed reaction is L-seryl-[protein] + acetyl-CoA = O-acetyl-L-seryl-[protein] + CoA. It catalyses the reaction sphinganine + ATP = sphinganine 1-phosphate + ADP + H(+). The enzyme catalyses sphing-4-enine + ATP = sphing-4-enine 1-phosphate + ADP + H(+). It carries out the reaction 1-O-hexadecyl-2-amino-sn-glycerol + ATP = 1-O-hexadecyl-2-desoxy-2-amino-sn-glycero-3-phosphate + ADP + H(+). Acetyltransferase activity increases in presence of the kinase substrate, sphingosine. In Purkinje cells, kinase activity on sphingosine increases in presence of VEGFA. In neurons, kinase activity increases during the first 24h in presence of Amyloid-beta protein 42 to decrease after 96h. Functionally, catalyzes the phosphorylation of sphingosine to form sphingosine 1-phosphate (SPP), a lipid mediator with both intra- and extracellular functions. Also acts on D-erythro-sphingosine and to a lesser extent sphinganine, but not other lipids, such as D,L-threo-dihydrosphingosine, N,N-dimethylsphingosine, diacylglycerol, ceramide, or phosphatidylinositol. In contrast to proapoptotic SPHK2, has a negative effect on intracellular ceramide levels, enhances cell growth and inhibits apoptosis. Involved in the regulation of inflammatory response and neuroinflammation. Via the product sphingosine 1-phosphate, stimulates TRAF2 E3 ubiquitin ligase activity, and promotes activation of NF-kappa-B in response to TNF signaling leading to IL17 secretion. In response to TNF and in parallel to NF-kappa-B activation, negatively regulates RANTES induction through p38 MAPK signaling pathway. Involved in endocytic membrane trafficking induced by sphingosine, recruited to dilate endosomes, also plays a role on later stages of endosomal maturation and membrane fusion independently of its kinase activity. In Purkinje cells, seems to be also involved in the regulation of autophagosome-lysosome fusion upon VEGFA. Has serine acetyltransferase activity on PTGS2/COX2 in an acetyl-CoA dependent manner. The acetyltransferase activity increases in presence of the kinase substrate, sphingosine. During neuroinflammation, through PTGS2 acetylation, promotes neuronal secretion of specialized preresolving mediators (SPMs), especially 15-R-lipoxin A4, which results in an increase of phagocytic microglia. This chain is Sphingosine kinase 1, found in Homo sapiens (Human).